Reading from the N-terminus, the 729-residue chain is Subtilisin-like protease SBT4.3 (729 aa).

Positions 1–23 (MAKLSTPLYLICLAFIFTRDVSA) are cleaved as a signal peptide. Residues 24-109 (NDYRQASSVY…VFPSKSHELT (86 aa)) constitute a propeptide, activation peptide. Residues 32 to 108 (VYIVYMGTLP…SVFPSKSHEL (77 aa)) form the Inhibitor I9 domain. Asn82 carries N-linked (GlcNAc...) asparagine glycosylation. The region spanning 113–580 (SWDFVGFGEK…SGQINPTKAS (468 aa)) is the Peptidase S8 domain. Residues Asp139 and His196 each act as charge relay system in the active site. N-linked (GlcNAc...) asparagine glycans are attached at residues Asn275, Asn348, Asn359, and Asn363. A PA domain is found at 350–436 (TKFPIVYGQN…LGFEDYKSIK (87 aa)). Ser521 serves as the catalytic Charge relay system. Asn614, Asn642, and Asn656 each carry an N-linked (GlcNAc...) asparagine glycan.

It belongs to the peptidase S8 family. In terms of processing, the C-terminal propeptide is autocleaved.

It is found in the secreted. In Arabidopsis thaliana (Mouse-ear cress), this protein is Subtilisin-like protease SBT4.3.